Reading from the N-terminus, the 760-residue chain is Xaa-Pro dipeptidyl-peptidase (760 aa).

Catalysis depends on charge relay system residues Ser349, Asp469, and His499.

Belongs to the peptidase S15 family. Homodimer.

Its subcellular location is the cytoplasm. It catalyses the reaction Hydrolyzes Xaa-Pro-|- bonds to release unblocked, N-terminal dipeptides from substrates including Ala-Pro-|-p-nitroanilide and (sequentially) Tyr-Pro-|-Phe-Pro-|-Gly-Pro-|-Ile.. Removes N-terminal dipeptides sequentially from polypeptides having unsubstituted N-termini provided that the penultimate residue is proline. This chain is Xaa-Pro dipeptidyl-peptidase, found in Streptococcus pyogenes serotype M2 (strain MGAS10270).